Consider the following 995-residue polypeptide: KN motif and ankyrin repeat domain-containing protein 4 (995 aa).

Disordered stretches follow at residues 1-29 (MEKTDAKDQSSQGDEEKDPPKSHPYSVET) and 68-127 (TLPR…EVSY). A compositionally biased stretch (polar residues) spans 101–124 (LGTQEQNQSPPLGNAPQASTSRSE). Residues 343-404 (SSLKQQVSAL…EGQFHQENAK (62 aa)) adopt a coiled-coil conformation. Disordered regions lie at residues 443-467 (ESWGHRGEENGLLWGPDGHKQGNQS), 503-558 (EAGT…PTDA), 617-642 (QAHPPKEPPASSSSPPVEISPSTSLK), 663-705 (LQFV…PDHK), and 721-740 (PEGTCHAAQESGPGEEVPHS). Residues 511-523 (GPQGGTRGAGGFL) show a composition bias toward gly residues. Residues 526–549 (SDRKTPPAGREETSSNLPGKEHPG) show a composition bias toward basic and acidic residues. Residues 625–640 (PASSSSPPVEISPSTS) are compositionally biased toward low complexity. The span at 680-693 (TSGEDSTPEDLSDS) shows a compositional bias: acidic residues. Positions 694-705 (EAEKKCDGPDHK) are enriched in basic and acidic residues. 5 ANK repeats span residues 823 to 853 (NGNTALHYSVSHSNFSIVKLLLETGVCNVDH), 862 to 890 (VMITPLASAETNEDMAVVWKLLREGNVNI), 895 to 924 (GGQTALMLGVSHDREDMVQALLSCQADVNL), 928 to 958 (DGSSALMVACHHGNVDLVRLLLAHPACDSSL), and 962 to 992 (AGRTALSIALKSPTHMEIAGLLRAHAEQGRS).

Strongly expressed in colon, liver, lung, skeletal muscle and kidney.

It is found in the cytoplasm. Its function is as follows. May be involved in the control of cytoskeleton formation by regulating actin polymerization. The polypeptide is KN motif and ankyrin repeat domain-containing protein 4 (KANK4) (Homo sapiens (Human)).